The following is a 126-amino-acid chain: Membrane-anchored ubiquitin-fold protein 2 (126 aa).

The Ubiquitin-like domain maps to 14 to 79; the sequence is VEVRFRLDDG…VLENNRTLAE (66 aa). Cys123 is modified (cysteine methyl ester). Cys123 carries S-geranylgeranyl cysteine lipidation. A propeptide spans 124–126 (removed in mature form); the sequence is TIL.

Its subcellular location is the cell membrane. May serve as docking site to facilitate the association of other proteins to the plasma membrane. The polypeptide is Membrane-anchored ubiquitin-fold protein 2 (MUB2) (Oryza sativa subsp. japonica (Rice)).